A 406-amino-acid polypeptide reads, in one-letter code: Tyrosine--tRNA ligase (406 aa).

L-tyrosine is bound at residue Tyr-35. The 'HIGH' region signature appears at 40–49; sequence PTGPSLHIGH. 2 residues coordinate L-tyrosine: Tyr-168 and Gln-172. Residues 228–232 carry the 'KMSKS' region motif; it reads KMGKS. Lys-231 serves as a coordination point for ATP. The S4 RNA-binding domain occupies 339–405; that stretch reads IGIIDLFAEA…GKKRFMRIIF (67 aa).

This sequence belongs to the class-I aminoacyl-tRNA synthetase family. TyrS type 1 subfamily. As to quaternary structure, homodimer.

It localises to the cytoplasm. It carries out the reaction tRNA(Tyr) + L-tyrosine + ATP = L-tyrosyl-tRNA(Tyr) + AMP + diphosphate + H(+). Its function is as follows. Catalyzes the attachment of tyrosine to tRNA(Tyr) in a two-step reaction: tyrosine is first activated by ATP to form Tyr-AMP and then transferred to the acceptor end of tRNA(Tyr). This chain is Tyrosine--tRNA ligase, found in Treponema denticola (strain ATCC 35405 / DSM 14222 / CIP 103919 / JCM 8153 / KCTC 15104).